We begin with the raw amino-acid sequence, 477 residues long: MKLSMPRFDQAPVLVVGDVMLDRYWHGGTSRISPEAPVPVVKVEQIEDRPGGAANVALNIAALGAPASLVGVTGDDEAADSLANSLQGAGVRALFQRIKHQPTIVKLRVMSRHQQLLRIDFEEPFATDALALAAEVDALLDGIKVLVLSDYGKGALRNHQVLIAAARARGIPVLADPKGKDFSIYRGASLITPNLSEFETIVGGCADEHELVSKGAQLMHDLELGALLVTRGEHGMTLLRPDHPAMHLPARAREVFDVTGAGDTVISTLAAAIAAGEELPHAVGLANLAAGIVVGKLGTAAISAPELRRAIQREEGSERGVLSLDQLLLAIDDARAHNEKIVFTNGCFDILHAGHVTYLEQARAQGDRLIVAINDDASVSRLKGPGRPINSVDRRMAVLAGLGAVDWVISFPEGTPENLLSQVRPDVLVKGGDYSIDQVVGADIVGAYGGTVKVLGLVENSSTTAIVEKIRKTDKAE.

Positions 1–318 (MKLSMPRFDQ…RAIQREEGSE (318 aa)) are ribokinase. Residue 194 to 197 (NLSE) coordinates ATP. Aspartate 263 is an active-site residue. The tract at residues 343–477 (FTNGCFDILH…EKIRKTDKAE (135 aa)) is cytidylyltransferase.

This sequence in the N-terminal section; belongs to the carbohydrate kinase PfkB family. The protein in the C-terminal section; belongs to the cytidylyltransferase family. Homodimer.

It catalyses the reaction D-glycero-beta-D-manno-heptose 7-phosphate + ATP = D-glycero-beta-D-manno-heptose 1,7-bisphosphate + ADP + H(+). The enzyme catalyses D-glycero-beta-D-manno-heptose 1-phosphate + ATP + H(+) = ADP-D-glycero-beta-D-manno-heptose + diphosphate. It participates in nucleotide-sugar biosynthesis; ADP-L-glycero-beta-D-manno-heptose biosynthesis; ADP-L-glycero-beta-D-manno-heptose from D-glycero-beta-D-manno-heptose 7-phosphate: step 1/4. The protein operates within nucleotide-sugar biosynthesis; ADP-L-glycero-beta-D-manno-heptose biosynthesis; ADP-L-glycero-beta-D-manno-heptose from D-glycero-beta-D-manno-heptose 7-phosphate: step 3/4. In terms of biological role, catalyzes the phosphorylation of D-glycero-D-manno-heptose 7-phosphate at the C-1 position to selectively form D-glycero-beta-D-manno-heptose-1,7-bisphosphate. Its function is as follows. Catalyzes the ADP transfer from ATP to D-glycero-beta-D-manno-heptose 1-phosphate, yielding ADP-D-glycero-beta-D-manno-heptose. This is Bifunctional protein HldE from Pseudomonas fluorescens (strain ATCC BAA-477 / NRRL B-23932 / Pf-5).